The chain runs to 457 residues: MNSTTKHLLHCTLLITVIVTFEVFSGGIKIDENSFTLVDPWTEYGQLATVLLYLLRFLTLLTLPQVLFNFCGLVFYNAFPEKVVLKGSPLLAPFICIRVVTRGDFPDLVKTNVLRNMNTCLDTGLENFLIEVVTDKAVNLSQHRRIREIVVPKEYKTRTGALFKSRALQYCLEDNVNVLNDSDWIVHLDEETLLTENSVRGIINFVLDGKHPFGQGLITYANENVVNWLTTLADSFRVSDDMGKLRLQFKLFHKPLFSWKGSYVVTQVSAERSVSFDNGIDGSVAEDCFFAMRAFSQGYTFNFIEGEMYEKSPFTLLDFLQQRKRWLQGILLVVHSKMIPFKHKLLLGISVYSWVTMPLSTSNIIFAALYPIPCPNLVDFVCAFIAAINIYMYVFGVIKSFSLYRFGLFRFLACVLGAVCTIPVNVVIENVAVIWGLVGKKHKFYVVQKDVRVLETV.

A run of 6 helical transmembrane segments spans residues 8 to 28, 35 to 55, 57 to 77, 346 to 366, 378 to 398, and 415 to 435; these read LLHC…SGGI, FTLV…LYLL, FLTL…VFYN, LLGI…NIIF, VDFV…FGVI, and VLGA…AVIW.

The protein belongs to the glycosyltransferase 2 family.

The protein localises to the membrane. Glycosyltransferase with a proposed role in glycosphingolipid biosynthesis. Neurogenic protein implicated in epithelial development. Critical component of a differential oocyte-follicle cell adhesive system. This Drosophila melanogaster (Fruit fly) protein is Beta-1,4-mannosyltransferase egh (egh).